The primary structure comprises 454 residues: Pyrrolysine--tRNA ligase (454 aa).

Residues 102–138 (TRTKKAMPKSVARAPKPLENTEAAQAQPSGSKFSPAI) form a disordered region. Positions 123-133 (EAAQAQPSGSK) are enriched in polar residues.

The protein belongs to the class-II aminoacyl-tRNA synthetase family.

The protein resides in the cytoplasm. The enzyme catalyses tRNA(Pyl) + L-pyrrolysine + ATP = L-pyrrolysyl-tRNA(Pyl) + AMP + diphosphate. Functionally, catalyzes the attachment of pyrrolysine to tRNA(Pyl). Pyrrolysine is a lysine derivative encoded by the termination codon UAG. The polypeptide is Pyrrolysine--tRNA ligase (Methanosarcina mazei (strain ATCC BAA-159 / DSM 3647 / Goe1 / Go1 / JCM 11833 / OCM 88) (Methanosarcina frisia)).